The following is a 312-amino-acid chain: Transcription initiation factor IIB (312 aa).

The segment at 10–42 (FVQTCSDCGETQNIVEDYKNGYHVCGRCGCIVG) adopts a TFIIB-type zinc-finger fold. Zn(2+)-binding residues include Cys14, Cys17, Cys34, and Cys37. 2 repeat units span residues 120–196 (FCER…LISP) and 213–290 (FCSD…ELLT).

Belongs to the TFIIB family. In terms of assembly, associates with TFIID-IIA (DA complex) to form TFIID-IIA-IIB (DAB-complex) which is then recognized by polymerase II.

It localises to the nucleus. Functionally, general factor that plays a major role in the activation of eukaryotic genes transcribed by RNA polymerase II. The chain is Transcription initiation factor IIB from Encephalitozoon cuniculi (strain GB-M1) (Microsporidian parasite).